We begin with the raw amino-acid sequence, 123 residues long: Small ribosomal subunit protein uS12 (123 aa).

Residues M1–R22 form a disordered region. The residue at position 89 (D89) is a 3-methylthioaspartic acid. The segment at A101–K123 is disordered. Basic residues predominate over residues K111 to K123.

Belongs to the universal ribosomal protein uS12 family. As to quaternary structure, part of the 30S ribosomal subunit. Contacts proteins S8 and S17. May interact with IF1 in the 30S initiation complex.

Its function is as follows. With S4 and S5 plays an important role in translational accuracy. Interacts with and stabilizes bases of the 16S rRNA that are involved in tRNA selection in the A site and with the mRNA backbone. Located at the interface of the 30S and 50S subunits, it traverses the body of the 30S subunit contacting proteins on the other side and probably holding the rRNA structure together. The combined cluster of proteins S8, S12 and S17 appears to hold together the shoulder and platform of the 30S subunit. This is Small ribosomal subunit protein uS12 from Teredinibacter turnerae (strain ATCC 39867 / T7901).